Reading from the N-terminus, the 360-residue chain is MKSSIVAKLEALQERHEEVLAYLGDASVIADQDRFRALSREYAQLTDVTRCFKEWRSAQDDIEAAEMMLDDLEMREMAQEELKIAKARSEELEQQLQVLLLPKDPDDERDCFLEIRAGTGGDEAAIFAGDMFRMYSRYAETRRWKVEIMSASEGEHGGYKEVIAKISGDGVFGQLKFESGGHRVQRVPETESQGRIHTSACTVAVMPAIPEAELPEINAGDLRIDTFRSSGAGGQHVNTTDSAIRITHIPTGIVVECQDERSQHKNKAKAMSVLGARIRAAEMQKRQLAEASERRNLLGTGDRSDRNRTYNFPQGRVTDHRINLTLYRLDEVMEGKLDMLIQPIVQEYQADQLSALSEQD.

At Gln-235 the chain carries N5-methylglutamine. Residues Ala-291–Arg-308 are compositionally biased toward basic and acidic residues. The interval Ala-291–Phe-312 is disordered.

This sequence belongs to the prokaryotic/mitochondrial release factor family. Methylated by PrmC. Methylation increases the termination efficiency of RF1.

The protein resides in the cytoplasm. Functionally, peptide chain release factor 1 directs the termination of translation in response to the peptide chain termination codons UAG and UAA. This Yersinia pseudotuberculosis serotype I (strain IP32953) protein is Peptide chain release factor 1.